The following is a 650-amino-acid chain: Secretin OutD (650 aa).

The N-terminal stretch at methionine 1–serine 18 is a signal peptide. Residues glutamate 20–glycine 115 form an N0 region. The N1 stretch occupies residues glutamate 117 to glycine 181. The tract at residues aspartate 182–alanine 255 is N2. Positions glycine 258 to aspartate 330 are N3. Residues glutamine 335–aspartate 585 form a secretin region. The interval serine 587–lysine 650 is s domain.

This sequence belongs to the bacterial secretin family. GSP D subfamily. As to quaternary structure, forms a cylindrical channel with 15 subunits.

The protein localises to the cell outer membrane. In terms of biological role, involved in a type II secretion system (T2SS, formerly general secretion pathway, GSP) for the export of proteins. Required for the translocation of the multiple pectic enzymes. This subunit forms the outer membrane channel. The protein is Secretin OutD (outD) of Pectobacterium carotovorum subsp. carotovorum (Erwinia carotovora subsp. carotovora).